Reading from the N-terminus, the 473-residue chain is Glucose-1-phosphate adenylyltransferase small subunit, chloroplastic/amyloplastic (473 aa).

The interval 1-36 (MDVPLASKTFPSPSPSKREQCNIDGHKSSSKHADLN) is disordered. Basic and acidic residues predominate over residues 16 to 36 (SKREQCNIDGHKSSSKHADLN).

The protein belongs to the bacterial/plant glucose-1-phosphate adenylyltransferase family. As to quaternary structure, heterotetramer. In terms of tissue distribution, abundantly expressed in the whole grains, a slightly less abundant expression is seen in leaves, while a low level expression is seen in the roots. A greater expression is seen in the endosperm than in the embryo and pericarp layers.

Its subcellular location is the plastid. The protein resides in the chloroplast. The protein localises to the amyloplast. The catalysed reaction is alpha-D-glucose 1-phosphate + ATP + H(+) = ADP-alpha-D-glucose + diphosphate. It participates in glycan biosynthesis; starch biosynthesis. Its activity is regulated as follows. Insensitive to 3'phosphoglycerate and orthophosphate. This protein plays a role in synthesis of starch. It catalyzes the synthesis of the activated glycosyl donor, ADP-glucose from Glc-1-P and ATP. The sequence is that of Glucose-1-phosphate adenylyltransferase small subunit, chloroplastic/amyloplastic (AGP-S) from Triticum aestivum (Wheat).